Reading from the N-terminus, the 254-residue chain is Probable triosephosphate isomerase 2 (254 aa).

9-11 is a substrate binding site; that stretch reads NMK. Histidine 96 acts as the Electrophile in catalysis. Glutamate 168 (proton acceptor) is an active-site residue. Substrate contacts are provided by glycine 174 and serine 212.

This sequence belongs to the triosephosphate isomerase family. Homodimer.

The protein localises to the cytoplasm. It carries out the reaction D-glyceraldehyde 3-phosphate = dihydroxyacetone phosphate. It participates in carbohydrate biosynthesis; gluconeogenesis. The protein operates within carbohydrate degradation; glycolysis; D-glyceraldehyde 3-phosphate from glycerone phosphate: step 1/1. Involved in the gluconeogenesis. Catalyzes stereospecifically the conversion of dihydroxyacetone phosphate (DHAP) to D-glyceraldehyde-3-phosphate (G3P). In Listeria monocytogenes serotype 4b (strain F2365), this protein is Probable triosephosphate isomerase 2.